Here is a 108-residue protein sequence, read N- to C-terminus: AVELTQTPASVEAAVGGTVTIKCQASQBIYSYLSWYQQKPGQPPKLLIYKASTLASGVSSRFKGSGSGTEFTLTISDLZCADAATYYCQTYSYSSTYFGGGTEVVVKG.

The interval 1–23 (AVELTQTPASVEAAVGGTVTIKC) is framework-1. Positions 24-34 (QASQBIYSYLS) are complementarity-determining-1. Positions 35–49 (WYQQKPGQPPKLLIY) are framework-2. The interval 50–56 (KASTLAS) is complementarity-determining-2. The interval 57–88 (GVSSRFKGSGSGTEFTLTISDLZCADAATYYC) is framework-3. Residues 89 to 97 (QTYSYSSTY) form a complementarity-determining-3 region. A framework-4 region spans residues 98 to 107 (FGGGTEVVVK).

This chain is Ig kappa chain V region K-25, found in Oryctolagus cuniculus (Rabbit).